A 273-amino-acid polypeptide reads, in one-letter code: Dermonecrotic toxin LruSicTox-alphaIC1c (273 aa).

His5 is an active-site residue. 2 residues coordinate Mg(2+): Glu25 and Asp27. His41 functions as the Nucleophile in the catalytic mechanism. Intrachain disulfides connect Cys45–Cys51 and Cys47–Cys190. A Mg(2+)-binding site is contributed by Asp85.

Belongs to the arthropod phospholipase D family. Class II subfamily. Requires Mg(2+) as cofactor. As to expression, expressed by the venom gland.

The protein resides in the secreted. It catalyses the reaction an N-(acyl)-sphingosylphosphocholine = an N-(acyl)-sphingosyl-1,3-cyclic phosphate + choline. The enzyme catalyses an N-(acyl)-sphingosylphosphoethanolamine = an N-(acyl)-sphingosyl-1,3-cyclic phosphate + ethanolamine. It carries out the reaction a 1-acyl-sn-glycero-3-phosphocholine = a 1-acyl-sn-glycero-2,3-cyclic phosphate + choline. The catalysed reaction is a 1-acyl-sn-glycero-3-phosphoethanolamine = a 1-acyl-sn-glycero-2,3-cyclic phosphate + ethanolamine. Its function is as follows. Dermonecrotic toxins cleave the phosphodiester linkage between the phosphate and headgroup of certain phospholipids (sphingolipid and lysolipid substrates), forming an alcohol (often choline) and a cyclic phosphate. This toxin acts on sphingomyelin (SM). It may also act on ceramide phosphoethanolamine (CPE), lysophosphatidylcholine (LPC) and lysophosphatidylethanolamine (LPE), but not on lysophosphatidylserine (LPS), and lysophosphatidylglycerol (LPG). It acts by transphosphatidylation, releasing exclusively cyclic phosphate products as second products. Induces dermonecrosis, hemolysis, increased vascular permeability, edema, inflammatory response, and platelet aggregation. The sequence is that of Dermonecrotic toxin LruSicTox-alphaIC1c from Loxosceles rufescens (Mediterranean recluse spider).